The chain runs to 395 residues: 1-deoxy-D-xylulose 5-phosphate reductoisomerase (395 aa).

NADPH contacts are provided by threonine 13, glycine 14, serine 15, isoleucine 16, lysine 40, and asparagine 127. Lysine 128 serves as a coordination point for 1-deoxy-D-xylulose 5-phosphate. Glutamate 129 provides a ligand contact to NADPH. Aspartate 153 contacts Mn(2+). Positions 154, 155, 184, and 207 each coordinate 1-deoxy-D-xylulose 5-phosphate. A Mn(2+)-binding site is contributed by glutamate 155. NADPH is bound at residue glycine 213. Serine 220, asparagine 225, lysine 226, and glutamate 229 together coordinate 1-deoxy-D-xylulose 5-phosphate. A Mn(2+)-binding site is contributed by glutamate 229.

It belongs to the DXR family. Mg(2+) serves as cofactor. The cofactor is Mn(2+).

It carries out the reaction 2-C-methyl-D-erythritol 4-phosphate + NADP(+) = 1-deoxy-D-xylulose 5-phosphate + NADPH + H(+). It participates in isoprenoid biosynthesis; isopentenyl diphosphate biosynthesis via DXP pathway; isopentenyl diphosphate from 1-deoxy-D-xylulose 5-phosphate: step 1/6. Functionally, catalyzes the NADPH-dependent rearrangement and reduction of 1-deoxy-D-xylulose-5-phosphate (DXP) to 2-C-methyl-D-erythritol 4-phosphate (MEP). This Nitrosospira multiformis (strain ATCC 25196 / NCIMB 11849 / C 71) protein is 1-deoxy-D-xylulose 5-phosphate reductoisomerase.